The primary structure comprises 298 residues: Syntaxin-4 (298 aa).

At 1 to 274 (MRDRTHELRQ…NQKKARKKKV (274 aa)) the chain is on the cytoplasmic side. 7 positions are modified to phosphoserine: Ser-15, Ser-29, Ser-35, Ser-36, Ser-117, Ser-208, and Ser-248. The stretch at 38 to 163 (DDEFFQKVQT…ERIRRQLKIT (126 aa)) forms a coiled coil. Positions 154–298 (ERIRRQLKIT…VIIGITITVG (145 aa)) are interaction with CENPF. In terms of domain architecture, t-SNARE coiled-coil homology spans 200–262 (LNEISARHSE…ERGQEHVKIA (63 aa)). A helical; Anchor for type IV membrane protein transmembrane segment spans residues 275–295 (MIAICVSVTVLILAVIIGITI). At 296–298 (TVG) the chain is on the extracellular side.

This sequence belongs to the syntaxin family. In terms of assembly, found in a complex with VAMP8 and SNAP23. Detected in a complex with SNAP23 and STXBP4. Interacts with SNAP23 and SNAPIN. Interacts with VAMP2. Interacts with LLGL1. Interacts (via C-terminus) with CENPF. Interacts with DOC2B. Interacts with STXBP3; excludes interaction with DOC2B and SNAP25. Interacts with STXBP4; excludes interaction with VAMP2. Component of the SNARE complex composed of STX4, SNAP23 and VAMP7 that interacts with SYT7 during lysosomal exocytosis. Interacts with STXBP6. Interacts with STXBP5L. In terms of tissue distribution, expressed in all tissues tested including adipose, brain, testis, intestine, liver, heart, spleen, skeletal muscle and kidney.

Its subcellular location is the cell membrane. It is found in the cell projection. It localises to the neuron projection. The protein resides in the stereocilium. Functionally, plasma membrane t-SNARE that mediates docking of transport vesicles. Necessary for the translocation of SLC2A4 from intracellular vesicles to the plasma membrane. In neurons, recruited at neurite tips to membrane domains rich in the phospholipid 1-oleoyl-2-palmitoyl-PC (OPPC) which promotes neurite tip surface expression of the dopamine transporter SLC6A3/DAT by facilitating fusion of SLC6A3-containing transport vesicles with the plasma membrane. Together with STXB3 and VAMP2, may also play a role in docking/fusion of intracellular GLUT4-containing vesicles with the cell surface in adipocytes and in docking of synaptic vesicles at presynaptic active zones. Required for normal hearing. The sequence is that of Syntaxin-4 (Stx4) from Rattus norvegicus (Rat).